Consider the following 321-residue polypeptide: Anthranilate phosphoribosyltransferase (321 aa).

5-phospho-alpha-D-ribose 1-diphosphate is bound by residues Gly72, Gly75–Asp76, Thr80, Asn82–Thr85, Lys99–Ser107, and Ser111. Position 72 (Gly72) interacts with anthranilate. Ser84 contributes to the Mg(2+) binding site. Asn102 contacts anthranilate. Arg157 is an anthranilate binding site. The Mg(2+) site is built by Asp216 and Glu217.

The protein belongs to the anthranilate phosphoribosyltransferase family. As to quaternary structure, homodimer. Mg(2+) serves as cofactor.

It catalyses the reaction N-(5-phospho-beta-D-ribosyl)anthranilate + diphosphate = 5-phospho-alpha-D-ribose 1-diphosphate + anthranilate. It functions in the pathway amino-acid biosynthesis; L-tryptophan biosynthesis; L-tryptophan from chorismate: step 2/5. In terms of biological role, catalyzes the transfer of the phosphoribosyl group of 5-phosphorylribose-1-pyrophosphate (PRPP) to anthranilate to yield N-(5'-phosphoribosyl)-anthranilate (PRA). This Methanococcus maripaludis (strain C6 / ATCC BAA-1332) protein is Anthranilate phosphoribosyltransferase.